The following is a 179-amino-acid chain: Large ribosomal subunit protein uL6 (179 aa).

It belongs to the universal ribosomal protein uL6 family. In terms of assembly, part of the 50S ribosomal subunit.

In terms of biological role, this protein binds to the 23S rRNA, and is important in its secondary structure. It is located near the subunit interface in the base of the L7/L12 stalk, and near the tRNA binding site of the peptidyltransferase center. This chain is Large ribosomal subunit protein uL6, found in Leptospira interrogans serogroup Icterohaemorrhagiae serovar copenhageni (strain Fiocruz L1-130).